The following is a 159-amino-acid chain: Developmental pluripotency-associated protein 3 (159 aa).

Disordered stretches follow at residues 1-31 (MDPS…GASQ) and 140-159 (GWDP…PLQP). Residues 149-159 (IGNQDTKPLQP) show a composition bias toward polar residues.

As to expression, low expression in testis, ovary and thymus. Expressed in embryonic stem and carcinoma cells. Highly expressed in testicular germ cell tumors.

The protein localises to the nucleus. It localises to the cytoplasm. Primordial germ cell (PGCs)-specific protein involved in epigenetic chromatin reprogramming in the zygote following fertilization. In zygotes, DNA demethylation occurs selectively in the paternal pronucleus before the first cell division, while the adjacent maternal pronucleus and certain paternally-imprinted loci are protected from this process. Participates in protection of DNA methylation in the maternal pronucleus by preventing conversion of 5mC to 5hmC: specifically recognizes and binds histone H3 dimethylated at 'Lys-9' (H3K9me2) on maternal genome, and protects maternal genome from TET3-mediated conversion to 5hmC and subsequent DNA demethylation. Does not bind paternal chromatin, which is mainly packed into protamine and does not contain much H3K9me2 mark. Also protects imprinted loci that are marked with H3K9me2 in mature sperm from DNA demethylation in early embryogenesis. May be important for the totipotent/pluripotent states continuing through preimplantation development. Also involved in chromatin condensation in oocytogenesis. In Homo sapiens (Human), this protein is Developmental pluripotency-associated protein 3 (DPPA3).